We begin with the raw amino-acid sequence, 1278 residues long: Alpha-glucan water dikinase 2 (1278 aa).

Positions 1 to 23 (MATSKSQQFQLIEGMELQITVTG) are cleaved as a signal peptide. The active-site Tele-phosphohistidine intermediate is histidine 886.

Belongs to the PEP-utilizing enzyme family. Homodimer. Mg(2+) is required as a cofactor.

It catalyses the reaction [(1-&gt;4)-alpha-D-glucosyl](n) + n ATP + n H2O = [(1-&gt;4)-6-phospho-alpha-D-glucosyl](n) + n AMP + n phosphate + 2n H(+). In terms of biological role, mediates the incorporation of phosphate into alpha-glucan, mostly at the C-6 position of glucose units. This chain is Alpha-glucan water dikinase 2 (GWD2), found in Arabidopsis thaliana (Mouse-ear cress).